The primary structure comprises 136 residues: MILNWKLLGILVLCLHTRGISGSEDHPSHPPAEDREEAGSPTLPQGPPVPGDPWPGAPPLFEDPPPPHPSPPWRDLPETGVWPPEPPRTDPPQPPRPDDPWPAGPQPPENPWPPAPEVDHRPQEEPDLDPPREEYR.

An N-terminal signal peptide occupies residues 1–22 (MILNWKLLGILVLCLHTRGISG). A disordered region spans residues 20–136 (ISGSEDHPSH…DLDPPREEYR (117 aa)). Over residues 23–33 (SEDHPSHPPAE) the composition is skewed to basic and acidic residues. 2 stretches are compositionally biased toward pro residues: residues 44–74 (PQGPPVPGDPWPGAPPLFEDPPPPHPSPPWR) and 83–116 (PPEPPRTDPPQPPRPDDPWPAGPQPPENPWPPAP). Over residues 117-136 (EVDHRPQEEPDLDPPREEYR) the composition is skewed to basic and acidic residues.

Its subcellular location is the secreted. This chain is Psoriasis susceptibility 1 candidate gene 2 protein homolog (PSORS1C2), found in Pan troglodytes (Chimpanzee).